We begin with the raw amino-acid sequence, 1165 residues long: DNA-directed RNA polymerase subunit beta (1165 aa).

Belongs to the RNA polymerase beta chain family. In terms of assembly, the RNAP catalytic core consists of 2 alpha, 1 beta, 1 beta' and 1 omega subunit. When a sigma factor is associated with the core the holoenzyme is formed, which can initiate transcription.

The enzyme catalyses RNA(n) + a ribonucleoside 5'-triphosphate = RNA(n+1) + diphosphate. Functionally, DNA-dependent RNA polymerase catalyzes the transcription of DNA into RNA using the four ribonucleoside triphosphates as substrates. The polypeptide is DNA-directed RNA polymerase subunit beta (Corynebacterium glutamicum (strain ATCC 13032 / DSM 20300 / JCM 1318 / BCRC 11384 / CCUG 27702 / LMG 3730 / NBRC 12168 / NCIMB 10025 / NRRL B-2784 / 534)).